We begin with the raw amino-acid sequence, 163 residues long: Putative C-type lectin protein FPV239 (163 aa).

Residues 48 to 159 enclose the C-type lectin domain; that stretch reads CKEGWVGYNK…CFLPKKWICR (112 aa). 2 disulfides stabilise this stretch: C76–C158 and C137–C150.

The sequence is that of Putative C-type lectin protein FPV239 from Fowlpox virus (strain NVSL) (FPV).